A 313-amino-acid polypeptide reads, in one-letter code: Solute carrier family 35 member E3 (313 aa).

9 consecutive transmembrane segments (helical) span residues 17–37 (GLLF…WIYV), 40–60 (GFPN…GLYI), 77–97 (LLLL…SLQN), 126–143 (FSTR…GVIL), 153–173 (FLGM…QVWV), 187–206 (LLYY…VPFF), 225–245 (LMVL…YWII), 252–272 (TYNM…YVLF), and 275–295 (PLSI…LAYT).

This sequence belongs to the TPT transporter family. SLC35E subfamily.

The protein resides in the membrane. In terms of biological role, putative transporter. The protein is Solute carrier family 35 member E3 (SLC35E3) of Homo sapiens (Human).